Reading from the N-terminus, the 419-residue chain is MKRLLILSLLLEAVCGNENFVGHQVLRISAADEAQVQKVKELEDLEHLQLDFWRDAARAGIPIDVRVPFPSIQSVKAFLEYHGISYEIMIEDVQLLLDEEKQQMSAFQARALSTDSFNYATYHTLDEIYEFMDLLVAEHPQLVSKIQIGNTFEGRPIHVLKFSTGGTNRPAIWIDTGIHSREWVTQASGVWFAKKITKDYGQDPTFTAVLDNMDIFLEIVTNPDGFAYTHKTNRMWRKTRSHTQGSLCVGVDPNRNWDAGFGMAGASSNPCSETYRGKFPNSEVEVKSIVDFVTSHGNIKAFISIHSYSQLLLYPYGYTSEPAPDQAELDQLAKSAVTALTSLHGTKFKYGSIIDTIYQASGSTIDWTYSQGIKYSFTFELRDTGLRGFLLPASQIIPTAEETWLALLTIMDHTVKHPY.

Residues 1–16 (MKRLLILSLLLEAVCG) form the signal peptide. The propeptide at 17–110 (NENFVGHQVL…KQQMSAFQAR (94 aa)) is activation peptide. In terms of domain architecture, Peptidase M14 spans 121–414 (TYHTLDEIYE…LALLTIMDHT (294 aa)). Zn(2+) is bound by residues His-179 and Glu-182. Substrate is bound by residues 179 to 182 (HSRE), Arg-237, and 254 to 255 (NR). An intrachain disulfide couples Cys-248 to Cys-271. His-306 contacts Zn(2+). Residues 307–308 (SY) and Tyr-358 contribute to the substrate site. The active-site Proton donor/acceptor is Glu-380.

Belongs to the peptidase M14 family. In terms of assembly, monomer. May form a complex with proelastase 2. It depends on Zn(2+) as a cofactor.

It localises to the secreted. It carries out the reaction Release of a C-terminal amino acid, but little or no action with -Asp, -Glu, -Arg, -Lys or -Pro.. It catalyses the reaction leukotriene C4 + H2O = leukotriene F4 + glycine. Functionally, carboxypeptidase that catalyzes the release of a C-terminal amino acid, but has little or no action with -Asp, -Glu, -Arg, -Lys or -Pro. Catalyzes the conversion of leukotriene C4 to leukotriene F4 via the hydrolysis of an amide bond. In Rattus norvegicus (Rat), this protein is Carboxypeptidase A1.